We begin with the raw amino-acid sequence, 287 residues long: Ribosomal RNA small subunit methyltransferase I (287 aa).

This sequence belongs to the methyltransferase superfamily. RsmI family.

Its subcellular location is the cytoplasm. It carries out the reaction cytidine(1402) in 16S rRNA + S-adenosyl-L-methionine = 2'-O-methylcytidine(1402) in 16S rRNA + S-adenosyl-L-homocysteine + H(+). Catalyzes the 2'-O-methylation of the ribose of cytidine 1402 (C1402) in 16S rRNA. This Streptococcus pyogenes serotype M3 (strain ATCC BAA-595 / MGAS315) protein is Ribosomal RNA small subunit methyltransferase I.